Consider the following 366-residue polypeptide: Phenylalanine dehydrogenase (366 aa).

An NAD(+)-binding site is contributed by arginine 45. Lysine 69 is a binding site for L-phenylalanine. Lysine 81 is a catalytic residue. Residues aspartate 116, threonine 151, 181-187, 204-205, 241-242, and 262-264 each bind NAD(+); these read GVGKVGE, DI, AK, and SAN. Residue asparagine 264 coordinates L-phenylalanine.

It belongs to the Glu/Leu/Phe/Val dehydrogenases family.

The enzyme catalyses L-phenylalanine + NAD(+) + H2O = 3-phenylpyruvate + NH4(+) + NADH + H(+). It participates in amino-acid biosynthesis; L-phenylalanine biosynthesis; L-phenylalanine from phenylpyruvate (PDH route): step 1/1. Its function is as follows. Catalyzes the reversible NAD(+)-dependent oxidative deamination of L-phenylalanine to phenylpyruvate. This is Phenylalanine dehydrogenase from Thermoactinomyces intermedius.